Reading from the N-terminus, the 377-residue chain is 23S rRNA (uracil(747)-C(5))-methyltransferase RlmC (377 aa).

Cysteine 3, cysteine 11, cysteine 14, and cysteine 87 together coordinate [4Fe-4S] cluster. Residues glutamine 212, phenylalanine 241, glutamate 262, and asparagine 307 each coordinate S-adenosyl-L-methionine. The Nucleophile role is filled by cysteine 334.

It belongs to the class I-like SAM-binding methyltransferase superfamily. RNA M5U methyltransferase family. RlmC subfamily.

It carries out the reaction uridine(747) in 23S rRNA + S-adenosyl-L-methionine = 5-methyluridine(747) in 23S rRNA + S-adenosyl-L-homocysteine + H(+). Functionally, catalyzes the formation of 5-methyl-uridine at position 747 (m5U747) in 23S rRNA. In Proteus mirabilis (strain HI4320), this protein is 23S rRNA (uracil(747)-C(5))-methyltransferase RlmC.